Here is a 147-residue protein sequence, read N- to C-terminus: UPF0178 protein VS_2364 (147 aa).

This sequence belongs to the UPF0178 family.

This chain is UPF0178 protein VS_2364, found in Vibrio atlanticus (strain LGP32) (Vibrio splendidus (strain Mel32)).